The chain runs to 354 residues: Uroporphyrinogen decarboxylase (354 aa).

Substrate is bound by residues 27–31 (RQAGR), Phe46, Asp77, Tyr154, Thr209, and His327.

This sequence belongs to the uroporphyrinogen decarboxylase family. As to quaternary structure, homodimer.

The protein resides in the cytoplasm. The catalysed reaction is uroporphyrinogen III + 4 H(+) = coproporphyrinogen III + 4 CO2. It functions in the pathway porphyrin-containing compound metabolism; protoporphyrin-IX biosynthesis; coproporphyrinogen-III from 5-aminolevulinate: step 4/4. Its function is as follows. Catalyzes the decarboxylation of four acetate groups of uroporphyrinogen-III to yield coproporphyrinogen-III. This Pseudomonas putida (strain ATCC 47054 / DSM 6125 / CFBP 8728 / NCIMB 11950 / KT2440) protein is Uroporphyrinogen decarboxylase.